Consider the following 186-residue polypeptide: Elongation factor P (186 aa).

It belongs to the elongation factor P family.

The protein localises to the cytoplasm. Its pathway is protein biosynthesis; polypeptide chain elongation. Its function is as follows. Involved in peptide bond synthesis. Stimulates efficient translation and peptide-bond synthesis on native or reconstituted 70S ribosomes in vitro. Probably functions indirectly by altering the affinity of the ribosome for aminoacyl-tRNA, thus increasing their reactivity as acceptors for peptidyl transferase. The sequence is that of Elongation factor P from Synechococcus sp. (strain CC9902).